Here is a 405-residue protein sequence, read N- to C-terminus: Octaketide synthase 3 (405 aa).

Positions 1–10 are enriched in polar residues; sequence MGSIAESSPL. The tract at residues 1–22 is disordered; it reads MGSIAESSPLMSRENVEGIRKA. Cys-176 is a catalytic residue. CoA is bound by residues Ser-283 and 320-323; that span reads GGRA.

This sequence belongs to the thiolase-like superfamily. Chalcone/stilbene synthases family. Homodimer.

It functions in the pathway secondary metabolite biosynthesis; flavonoid biosynthesis. Its function is as follows. Catalyzes the iterative condensations of 8 molecules of malonyl-CoA to produce aromatic octaketides, SEK4 and SEK4b, the products of the minimal polyketide synthase for the benzoisochromanequinone actinorhodin. May be involved in the biosynthesis of the octaketide barbaloin. This is Octaketide synthase 3 (PKS5) from Aloe arborescens (Kidachi aloe).